The following is a 325-amino-acid chain: Lipoyl synthase (325 aa).

Cysteine 68, cysteine 73, cysteine 79, cysteine 94, cysteine 98, cysteine 101, and serine 308 together coordinate [4Fe-4S] cluster. Residues phenylalanine 80–threonine 297 enclose the Radical SAM core domain.

Belongs to the radical SAM superfamily. Lipoyl synthase family. [4Fe-4S] cluster serves as cofactor.

It localises to the cytoplasm. The catalysed reaction is [[Fe-S] cluster scaffold protein carrying a second [4Fe-4S](2+) cluster] + N(6)-octanoyl-L-lysyl-[protein] + 2 oxidized [2Fe-2S]-[ferredoxin] + 2 S-adenosyl-L-methionine + 4 H(+) = [[Fe-S] cluster scaffold protein] + N(6)-[(R)-dihydrolipoyl]-L-lysyl-[protein] + 4 Fe(3+) + 2 hydrogen sulfide + 2 5'-deoxyadenosine + 2 L-methionine + 2 reduced [2Fe-2S]-[ferredoxin]. Its pathway is protein modification; protein lipoylation via endogenous pathway; protein N(6)-(lipoyl)lysine from octanoyl-[acyl-carrier-protein]: step 2/2. Functionally, catalyzes the radical-mediated insertion of two sulfur atoms into the C-6 and C-8 positions of the octanoyl moiety bound to the lipoyl domains of lipoate-dependent enzymes, thereby converting the octanoylated domains into lipoylated derivatives. The chain is Lipoyl synthase from Alcanivorax borkumensis (strain ATCC 700651 / DSM 11573 / NCIMB 13689 / SK2).